The sequence spans 253 residues: Peptidase inhibitor R3HDML (253 aa).

An N-terminal signal peptide occupies residues 1 to 23 (MPLLSSIVGLTGLLLWMGHTVGA). Positions 24 to 56 (LRMPNTTLVQGRPKNTAVWPLSGLGVPRHRRKR) are excised as a propeptide. N28 and N120 each carry an N-linked (GlcNAc...) asparagine glycan. One can recognise an SCP domain in the interval 67-207 (LDYHNHIRAS…QQAVYLVCNY (141 aa)).

Belongs to the CRISP family.

Its subcellular location is the secreted. In terms of biological role, putative serine protease inhibitor. In Mus musculus (Mouse), this protein is Peptidase inhibitor R3HDML (R3hdml).